Reading from the N-terminus, the 403-residue chain is MRKTVKRESEATGGKREADDEPEKLRSVKKEKQRKTEADSVRPDEPPPPQEEEQGISDRRILRSKYLSLQNEINDCKDDLMKIDSDKFSRIINAVENLHQQVRKPREQIADAEALLDIANTLMSSVKSQSAHGVSPAEFVNALISGFGQGSLGIDTDETAQVSLKWKDLGFAVCSTVLVSCGCSTMLGPMDTELKQRKRAPNRKRTKPGEGVRPDEVDDSQSEEKTDTDKNMTIMFNILGKKKRVQLENLVLNRRSFAQTVENLFALSFLAKDGRVEIIVDKSGSHFAMPRNAPDANVVMSGEVIYNHFVFRLDFKDWKLMSEMVPLGEELMPHRQTAVASSSCPAASAPASADFTQDTQTTPIRKLSRNRGLVVQEETVVEDTPDKEGDGTRRRCKRRLTSS.

The segment covering 1–45 has biased composition (basic and acidic residues); that stretch reads MRKTVKRESEATGGKREADDEPEKLRSVKKEKQRKTEADSVRPDE. 3 disordered regions span residues 1–57, 194–226, and 342–403; these read MRKT…QGIS, LKQR…EEKT, and SSCP…LTSS. Residues 196–206 show a composition bias toward basic residues; sequence QRKRAPNRKRT. Residues 342-353 are compositionally biased toward low complexity; the sequence is SSCPAASAPASA. A compositionally biased stretch (polar residues) spans 354 to 363; the sequence is DFTQDTQTTP. Residues 384-393 are compositionally biased toward basic and acidic residues; that stretch reads TPDKEGDGTR. Over residues 394–403 the composition is skewed to basic residues; that stretch reads RRCKRRLTSS.

It belongs to the NSE4 family. In terms of assembly, interacts with SMC5, SMC6A or SMC6B. The SMC5-SMC6 complex is composed of the SMC5 and SMC6 heterodimer attached via their hinge domain and from the non-SMC subunit NSE4A or NSE4B. As to expression, expressed in seedlings, rosette leaves and floral buds.

The protein localises to the nucleus. Its function is as follows. Component of the SMC5-SMC6 complex, that promotes sister chromatid alignment after DNA damage and facilitates double-stranded DNA breaks (DSBs) repair via homologous recombination between sister chromatids. This is Non-structural maintenance of chromosomes element 4 homolog A (NSE4A) from Arabidopsis thaliana (Mouse-ear cress).